The chain runs to 516 residues: Endo-acting ulvan lyase (516 aa).

The N-terminal stretch at 1-24 (MLEKTTLKNIILIHFLMFLAVVTA) is a signal peptide. A disulfide bridge connects residues cysteine 38 and cysteine 65. Residues glycine 42, asparagine 44, aspartate 62, serine 64, alanine 67, and asparagine 68 each coordinate Ca(2+). Residue tyrosine 138 coordinates substrate. The active-site Proton acceptor is the lysine 143. Substrate contacts are provided by residues 191-195 (EGDGR) and 260-263 (YRVK). Tyrosine 260 (proton donor/acceptor) is an active-site residue. The tract at residues 289 to 429 (PIGDVYKLKN…VWKAIAVESL (141 aa)) is ulvan-binding domain. A propeptide spans 430–516 (SVDENAILAS…NKYHKKLIVK (87 aa)) (removed by the type IX secretion system (T9SS)).

The protein belongs to the polysaccharide lyase 28 family. It depends on Ca(2+) as a cofactor.

It localises to the secreted. Ulvan lyase involved in ulvan degradation. Ulvan is the main polysaccharide component of the Ulvales (green seaweed) cell wall. It is composed of disaccharide building blocks comprising 3-sulfated rhamnose (Rha3S) linked to D-glucuronic acid (GlcA), L-iduronic acid (IduA), or D-xylose (Xyl). Ulvan lyase catalyzes the endolytic cleavage of the glycosidic bond between Rha3S and the uronic acids GlcA or IduA, producing oligosaccharides that have unsaturated 4-deoxy-L-threo-hex-4-enopyranosiduronic acid (deltaUA) at the non-reducing end. This results eventually in the degradation of the ulvan polysaccharide into deltaUA-Rha3S disaccharides and deltaUA-Rha3S-Xyl-Rha3S tetrasaccharides. This is Endo-acting ulvan lyase from Formosa agariphila (strain DSM 15362 / KCTC 12365 / LMG 23005 / KMM 3901 / M-2Alg 35-1).